Here is a 169-residue protein sequence, read N- to C-terminus: Crossover junction endodeoxyribonuclease RuvC (169 aa).

Active-site residues include aspartate 12, glutamate 72, and aspartate 144. The Mg(2+) site is built by aspartate 12, glutamate 72, and aspartate 144.

Belongs to the RuvC family. Homodimer which binds Holliday junction (HJ) DNA. The HJ becomes 2-fold symmetrical on binding to RuvC with unstacked arms; it has a different conformation from HJ DNA in complex with RuvA. In the full resolvosome a probable DNA-RuvA(4)-RuvB(12)-RuvC(2) complex forms which resolves the HJ. Mg(2+) serves as cofactor.

It is found in the cytoplasm. The catalysed reaction is Endonucleolytic cleavage at a junction such as a reciprocal single-stranded crossover between two homologous DNA duplexes (Holliday junction).. The RuvA-RuvB-RuvC complex processes Holliday junction (HJ) DNA during genetic recombination and DNA repair. Endonuclease that resolves HJ intermediates. Cleaves cruciform DNA by making single-stranded nicks across the HJ at symmetrical positions within the homologous arms, yielding a 5'-phosphate and a 3'-hydroxyl group; requires a central core of homology in the junction. The consensus cleavage sequence is 5'-(A/T)TT(C/G)-3'. Cleavage occurs on the 3'-side of the TT dinucleotide at the point of strand exchange. HJ branch migration catalyzed by RuvA-RuvB allows RuvC to scan DNA until it finds its consensus sequence, where it cleaves and resolves the cruciform DNA. This chain is Crossover junction endodeoxyribonuclease RuvC, found in Xanthobacter autotrophicus (strain ATCC BAA-1158 / Py2).